A 34-amino-acid polypeptide reads, in one-letter code: Cycloamanide E proprotein (34 aa).

Residues 1 to 10 (MSDINAARLP) constitute a propeptide that is removed on maturation. The cyclopeptide (Ser-Pro) cross-link spans 11–17 (SFFFPVP). The propeptide occupies 18–34 (CISDDIEMVLTRGESLC).

This sequence belongs to the MSDIN fungal toxin family. In terms of processing, processed by the macrocyclase-peptidase enzyme POPB to yield a cyclic decapeptide. POPB first removes 10 residues from the N-terminus. Conformational trapping of the remaining peptide forces the enzyme to release this intermediate rather than proceed to macrocyclization. The enzyme rebinds the remaining peptide in a different conformation and catalyzes macrocyclization of the N-terminal 7 residues.

Cyclic heptapeptide that belongs to the MSDIN-like toxin family responsible for a large number of food poisoning cases and deaths. Cycloaminide E is structurally related to other cycloamanides that are non-toxic to mammals but show immunosuppressive activity. The protein is Cycloamanide E proprotein of Amanita phalloides (Death cap).